We begin with the raw amino-acid sequence, 90 residues long: Heat shock protein beta-7 (90 aa).

Residues 39–90 (PLTFPARPGGQGNIKTLGDAYEFTVDMRDFSPEDIIVTTSNNHIEVRAEKKP) form the sHSP domain.

The protein belongs to the small heat shock protein (HSP20) family. In terms of assembly, interacts with C-terminal domain of actin-binding protein 280. In terms of tissue distribution, found in both cardiac and skeletal muscle.

The protein localises to the cytoplasm. It localises to the nucleus. The protein resides in the cajal body. In Rattus norvegicus (Rat), this protein is Heat shock protein beta-7 (Hspb7).